The sequence spans 298 residues: Glutamyl-Q tRNA(Asp) synthetase (298 aa).

Residues 9–13 (RFAPS) and E45 contribute to the L-glutamate site. A 'HIGH' region motif is present at residues 12 to 22 (PSPSGELHFGS). Zn(2+) contacts are provided by C101, C103, Y115, and C119. 2 residues coordinate L-glutamate: Y172 and R190. The 'KMSKS' region motif lies at 228-232 (KLSKQ). K231 is an ATP binding site.

This sequence belongs to the class-I aminoacyl-tRNA synthetase family. GluQ subfamily. The cofactor is Zn(2+).

In terms of biological role, catalyzes the tRNA-independent activation of glutamate in presence of ATP and the subsequent transfer of glutamate onto a tRNA(Asp). Glutamate is transferred on the 2-amino-5-(4,5-dihydroxy-2-cyclopenten-1-yl) moiety of the queuosine in the wobble position of the QUC anticodon. The sequence is that of Glutamyl-Q tRNA(Asp) synthetase from Cronobacter sakazakii (strain ATCC BAA-894) (Enterobacter sakazakii).